The chain runs to 501 residues: Pyruvate kinase (501 aa).

A substrate-binding site is contributed by Arg50. Positions 52, 54, 85, and 86 each coordinate K(+). ATP is bound at residue 52–55; the sequence is NFSH. Arg92 and Lys178 together coordinate ATP. Position 243 (Glu243) interacts with Mg(2+). Positions 266, 267, and 299 each coordinate substrate. Asp267 is a binding site for Mg(2+).

This sequence belongs to the pyruvate kinase family. In terms of assembly, homotetramer. Requires Mg(2+) as cofactor. K(+) serves as cofactor.

It carries out the reaction pyruvate + ATP = phosphoenolpyruvate + ADP + H(+). Its pathway is carbohydrate degradation; glycolysis; pyruvate from D-glyceraldehyde 3-phosphate: step 5/5. The polypeptide is Pyruvate kinase (PYK1) (Naumovozyma castellii (Yeast)).